Reading from the N-terminus, the 825-residue chain is Ent-copalyl diphosphate synthase 2, chloroplastic (825 aa).

Residues 1–70 (MVLSSSCTTV…KGSSLTPIVR (70 aa)) constitute a chloroplast transit peptide. K241 serves as a coordination point for substrate. Residues 373–376 (EVDD) carry the DXDD motif motif. Substrate is bound at residue K459.

The protein belongs to the terpene synthase family. Tpsc subfamily. It depends on Mg(2+) as a cofactor. Expressed in tassels.

It localises to the plastid. The protein localises to the chloroplast. It catalyses the reaction (2E,6E,10E)-geranylgeranyl diphosphate = ent-copalyl diphosphate. Its pathway is plant hormone biosynthesis; gibberellin biosynthesis. In terms of biological role, involved in gibberellin biosynthesis. Catalyzes the conversion of geranylgeranyl diphosphate to the gibberellin precursor ent-copalyl diphosphate (ent-CPP). Involved in the production of antifungal dolabralexin phytoalexins in response to biotic and abiotic stresses. In response to fungal infection and in associtation with KSL4, is involved in the production dolabradiene, a type of antifungal phytoalexin. In Zea mays (Maize), this protein is Ent-copalyl diphosphate synthase 2, chloroplastic.